The primary structure comprises 993 residues: Glycogen phosphorylase 2 (993 aa).

The disordered stretch occupies residues 1–82; the sequence is MEEKRSTNSP…SNQSEDPATQ (82 aa). The span at 19-48 shows a compositional bias: polar residues; the sequence is RSGSITSATSHPPRSNSNPKLVAKHQQQLY. Low complexity predominate over residues 58-77; it reads EQQNQQPQQQQQKQTSNQSE. N6-(pyridoxal phosphate)lysine is present on Lys-763. Over residues 962-981 the composition is skewed to polar residues; that stretch reads VISGGDKTNNTLKPKQTTKG. The disordered stretch occupies residues 962 to 993; sequence VISGGDKTNNTLKPKQTTKGFNIGGQPGNPTN. A compositionally biased stretch (gly residues) spans 983–993; the sequence is NIGGQPGNPTN.

Belongs to the glycogen phosphorylase family. In terms of assembly, homodimer. The cofactor is pyridoxal 5'-phosphate. Post-translationally, the N-terminus is blocked. In terms of processing, enzyme activity requires processing of the 113 kDa peptide to an enzymatically active 106 kDa form of the protein. Processing would occur near the middle of the Gln-rich repetitive element.

It carries out the reaction [(1-&gt;4)-alpha-D-glucosyl](n) + phosphate = [(1-&gt;4)-alpha-D-glucosyl](n-1) + alpha-D-glucose 1-phosphate. Its function is as follows. Phosphorylase is an important allosteric enzyme in carbohydrate metabolism. Enzymes from different sources differ in their regulatory mechanisms and in their natural substrates. However, all known phosphorylases share catalytic and structural properties. In Dictyostelium discoideum (Social amoeba), this protein is Glycogen phosphorylase 2 (glpD).